Here is a 141-residue protein sequence, read N- to C-terminus: Hemoglobin subunit alpha (141 aa).

The region spanning 1–141 is the Globin domain; the sequence is VLSPADKTNV…VSTVLTSKYR (141 aa). At Ser3 the chain carries Phosphoserine. Lys7 is subject to N6-succinyllysine. At Thr8 the chain carries Phosphothreonine. Lys11 is modified (N6-succinyllysine). Lys16 bears the N6-acetyllysine; alternate mark. Residue Lys16 is modified to N6-succinyllysine; alternate. Phosphotyrosine is present on Tyr24. N6-succinyllysine is present on Lys40. Position 58 (His58) interacts with O2. A heme b-binding site is contributed by His87. A Phosphoserine modification is found at Ser102. Residue Thr108 is modified to Phosphothreonine. Ser124 and Ser131 each carry phosphoserine. A phosphothreonine mark is found at Thr134 and Thr137. Ser138 is subject to Phosphoserine.

It belongs to the globin family. In terms of assembly, heterotetramer of two alpha chains and two beta chains. Red blood cells.

In terms of biological role, involved in oxygen transport from the lung to the various peripheral tissues. Hemopressin acts as an antagonist peptide of the cannabinoid receptor CNR1. Hemopressin-binding efficiently blocks cannabinoid receptor CNR1 and subsequent signaling. The polypeptide is Hemoglobin subunit alpha (HBA) (Tursiops truncatus (Atlantic bottle-nosed dolphin)).